We begin with the raw amino-acid sequence, 366 residues long: MLLPRDLLLLPWRRATAAGEAIARRLNHHRAPPFSDPDDDPPFTRLAERPPRAPSKKKKKEEEDQGGRIRPPEPASSDLPFDFRYSYSETDPAWRPIGFREPTRFSPFGPGRLDRPWDGVAAAAARGEGAGAAATSREEVLGEPLAEEEVAQLVERYRHSDCSRQINLGKGGVTHNMIDDIHNHWKRAEAVRIKCLGVPTLDMDNICFHLEDKTGGKVIYRNINILILYRGRNYDPKQRPQIPLMLWKPLAPIYPRLVQNVADGLTFEKTKELRNTGLNSSPLMKLTRNGVYVNVVDRVREAFKTVEVVRLDCSHVGSSDCKKIGVKLRDLVPCVPLLFKDEQIILWRGKVKQENSVSLQFSPEPS.

A mitochondrion-targeting transit peptide spans 1–14 (MLLPRDLLLLPWRR). The disordered stretch occupies residues 24-82 (RRLNHHRAPPFSDPDDDPPFTRLAERPPRAPSKKKKKEEEDQGGRIRPPEPASSDLPFD). Positions 60 to 71 (KEEEDQGGRIRP) are enriched in basic and acidic residues. 2 consecutive CRM domains span residues 143-241 (EPLA…QRPQ) and 263-359 (DGLT…SVSL).

In terms of assembly, part of large ribonucleo-protein complexes that include group IIB introns.

It localises to the mitochondrion. In terms of biological role, may be involved in the splicing of group IIB introns in mitochondria. In Oryza sativa subsp. japonica (Rice), this protein is CRS2-associated factor 2, mitochondrial.